Reading from the N-terminus, the 371-residue chain is Neuropeptide S receptor (371 aa).

The Extracellular segment spans residues 1–52 (MPANLTEGSFHANQTVPMLDSSPVACTEIVTFTEALVAEEWGSFYSSFKTEQ). N4 and N13 each carry an N-linked (GlcNAc...) asparagine glycan. A helical membrane pass occupies residues 53–73 (LITLWVLFVVTIVGNSVVLFS). Residues 74–82 (TCRRKRKSR) lie on the Cytoplasmic side of the membrane. Residues 83-103 (MTFFVTQLAITDSFTGLINIL) form a helical membrane-spanning segment. At 104 to 123 (TDIIWRFTGDFMAPDLVCRV) the chain is on the extracellular side. The cysteines at positions 121 and 197 are disulfide-linked. The chain crosses the membrane as a helical span at residues 124-144 (VRYLQVVLLYASTYVLVSLSI). The Cytoplasmic segment spans residues 145–164 (DRYHAIVYPMKFLQGEKQAK). The chain crosses the membrane as a helical span at residues 165–185 (VLIGIAWSLSFLFSIPTLIIF). The Extracellular portion of the chain corresponds to 186–212 (GKRTLSNGEVQCWALWPDDSYWTPYMT). A helical membrane pass occupies residues 213–233 (IVAFLVYFIPLAIISVIYGLV). The Cytoplasmic portion of the chain corresponds to 234–275 (IRTIWMKSKTHETVISNCSDGKLCCSYNRGLISKAKIKAIKY). The helical transmembrane segment at 276-296 (SIVIILAFICCWSPYFLFDIL) threads the bilayer. Residues 297–312 (DNFNVLPDTKERFYAS) lie on the Extracellular side of the membrane. Residues 313 to 333 (VIIQNLPALNSAINPLIYCIF) form a helical membrane-spanning segment. The Cytoplasmic segment spans residues 334 to 371 (SSSICSPCKMQRSQDSRMTYRERSERHEMQILSKPEFI).

It belongs to the G-protein coupled receptor 1 family. Vasopressin/oxytocin receptor subfamily.

It is found in the cell membrane. Its function is as follows. G-protein coupled receptor for neuropeptide S (NPS). Promotes mobilization of intracellular Ca(2+) stores. Inhibits cell growth in response to NPS binding. Involved in pathogenesis of asthma and other IgE-mediated diseases. The sequence is that of Neuropeptide S receptor (Npsr1) from Mus musculus (Mouse).